A 969-amino-acid chain; its full sequence is Manganese resistance protein MNR2 (969 aa).

Over residues 1–11 (MSTDNSQKDEG) the composition is skewed to basic and acidic residues. Disordered stretches follow at residues 1-49 (MSTD…SRRP), 96-153 (GAFI…DLSP), 167-186 (HKSF…NANN), and 199-256 (VNNN…NNSS). The Cytoplasmic segment spans residues 1–912 (MSTDNSQKDE…DMNDVLGKIT (912 aa)). The span at 13 to 23 (PLLSPYSSSPQ) shows a compositional bias: low complexity. Residues 24-36 (LRKKKRNQKRRKD) show a composition bias toward basic residues. A compositionally biased stretch (basic and acidic residues) spans 37 to 48 (KFVGHLKSDSRR). Serine 114 is modified (phosphoserine). A compositionally biased stretch (polar residues) spans 141–152 (SDQNRSLVSDLS). Phosphoserine is present on serine 175. Phosphothreonine is present on threonine 177. Phosphoserine is present on serine 182. Composition is skewed to low complexity over residues 225–234 (NKNSKSTSSD) and 244–256 (SRPS…NNSS). Serine 383 carries the post-translational modification Phosphoserine. Disordered regions lie at residues 559–662 (VRRR…KPRE) and 746–769 (QSDD…DEDA). Basic and acidic residues predominate over residues 565-578 (EKQESATLDHESIS). Threonine 571 carries the phosphothreonine modification. 2 positions are modified to phosphoserine: serine 576 and serine 582. 2 stretches are compositionally biased toward low complexity: residues 590 to 607 (SNES…ASRS) and 622 to 632 (ANRTTNTSSSS). Acidic residues predominate over residues 749–769 (DSSDSDSSDSDSDSGASDEDA). Residues 913 to 933 (ILGTIVLPMNVITGLWGMNVI) form a helical membrane-spanning segment. Over 934–941 (VPGQYRDS) the chain is Extracellular. A helical membrane pass occupies residues 942–962 (LTWFIGIVLFMCMLACSAYMY). Residues 963-969 (TKRRFGF) are Cytoplasmic-facing.

The protein belongs to the CorA metal ion transporter (MIT) (TC 1.A.35) family.

It localises to the membrane. This chain is Manganese resistance protein MNR2 (MNR2), found in Saccharomyces cerevisiae (strain ATCC 204508 / S288c) (Baker's yeast).